We begin with the raw amino-acid sequence, 506 residues long: MEEFKRYLELDRXQQHDFIYPLIFQEYIYALAHDRGLNKSIFFENADYDNKSSLLIVKRLITHLITQMYQQNHFFFYTNDFNPNKFLGYNTNLYSQMIFEGFVVVVEIPFYLRLLSFLEGKDREXLIXLXSLHSIFPFLEDKFSHLNYILDILIPHPVHLEILXQTLRYWVKDPSSLHLLXFFLHEYSNWNSLITPKKYSSSFSKRNQKFFLFLYNFHVCEYESIFVFLRNQSSHLCSISFETFLERILFYKKIELEIFVKDFKAILWVFKDPLLHYVRYRGKSILASKGSSLLMDKWKYYVVNFWECYFYIWAQPRRIHINQLSNNSLDFLGYLSSIRLKPSMVRSQMIENSFLIENASKKFDTLVPITPMIESLSKAKFCNVLGQPMSKPVWGGLSDSDIIERFGRIYRNLSHYYSGSLKKITLYRIKYILRLSCARTLARKHKSTVRSFLKRLGVGLLEEFFTEEEQVFYLTFPKASSTSRKLYQRRIWYLDIFCINDTANHE.

This sequence belongs to the intron maturase 2 family. MatK subfamily.

The protein resides in the plastid. It is found in the chloroplast. Functionally, usually encoded in the trnK tRNA gene intron. Probably assists in splicing its own and other chloroplast group II introns. This is Maturase K from Gaultheria procumbens (Wintergreen).